Consider the following 1438-residue polypeptide: DNA polymerase III PolC-type (1438 aa).

The 157-residue stretch at 422–578 (YVVFDVETTG…YDTESTAYIF (157 aa)) folds into the Exonuclease domain.

Belongs to the DNA polymerase type-C family. PolC subfamily.

Its subcellular location is the cytoplasm. It catalyses the reaction DNA(n) + a 2'-deoxyribonucleoside 5'-triphosphate = DNA(n+1) + diphosphate. Functionally, required for replicative DNA synthesis. This DNA polymerase also exhibits 3' to 5' exonuclease activity. This chain is DNA polymerase III PolC-type, found in Staphylococcus haemolyticus (strain JCSC1435).